A 66-amino-acid polypeptide reads, in one-letter code: M-poneratoxin-Dq3a (66 aa).

Residues Met1 to Ala23 form the signal peptide. Positions Glu24 to Ala43 are excised as a propeptide.

The protein belongs to the non-disulfide-bridged peptide (NDBP) superfamily. Medium-length antimicrobial peptide (group 3) family. Ponericin-W subfamily. In terms of tissue distribution, expressed by the venom gland.

The protein resides in the secreted. The protein localises to the target cell membrane. Functionally, may have antimicrobial properties by disrupting the integrity of the bacterial cell membrane. In addition, when tested in vitro on the parasite Trypanosoma cruzi (responsible of the Chagas disease), is able to potently reduce the number of the three forms (epimastigote, trypomastigote and amastigote) by inducing cell death through necrosis. May have antimicrobial properties by disrupting the integrity of the bacterial cell membrane. In addition, when tested in vitro on the parasite Trypanosoma cruzi (responsible of the Chagas disease), is able to moderately reduce the number of the forms epimastigote and trypomastigote. Its activity on the amastigote form has not been tested. Its function is as follows. May have antimicrobial properties by disrupting the integrity of the bacterial cell membrane. In addition, when tested in vitro on the parasite Trypanosoma cruzi (responsible of the Chagas disease), shows only a weak reduction of the number of the trypomastigote forms. Has no activity on the epimastigote forms. Its activity on the amastigote form has not been tested. The protein is M-poneratoxin-Dq3a of Dinoponera quadriceps (South American ant).